Here is a 342-residue protein sequence, read N- to C-terminus: NLP effector protein Pc107869 (342 aa).

Residues 1 to 19 (MKTGFFLFAACAALVAVQA) form the signal peptide. The N-linked (GlcNAc...) asparagine glycan is linked to Asn24. Residues 41 to 125 (APRTKAPPTK…PTPDPGPWEA (85 aa)) form a disordered region. Low complexity predominate over residues 55–75 (QQSSLSGSQEQQQEQIETPAP). Residues 93-121 (TPAPTPAPTPAPTPAPTPAPTPAPTPDPG) show a composition bias toward pro residues. Residues 226–232 (GHRHDWE) carry the Hepta-peptide GHRHDWE motif motif.

The protein belongs to the Necrosis inducing protein (NPP1) family.

The protein resides in the secreted. In terms of biological role, secreted effector that contributes strongly to virulence during infection by P.capsici. Induces cell death in the Solanaceae, including Nicotiana benthamiana. This is NLP effector protein Pc107869 from Phytophthora capsici.